Here is a 201-residue protein sequence, read N- to C-terminus: Recombination protein RecR (201 aa).

The C4-type zinc finger occupies 60–75 (CSCCGNVDTSDPCTIC). The region spanning 83–178 (ATLIVVEDVS…RVTRLAHGVP (96 aa)) is the Toprim domain.

It belongs to the RecR family.

May play a role in DNA repair. It seems to be involved in an RecBC-independent recombinational process of DNA repair. It may act with RecF and RecO. The sequence is that of Recombination protein RecR from Brucella melitensis biotype 2 (strain ATCC 23457).